The following is a 787-amino-acid chain: ER degradation-enhancing alpha-mannosidase-like protein 1 (787 aa).

A signal peptide spans Met-1 to Ser-22. Residues Asn-479, Asn-609, Asn-670, Asn-693, and Asn-756 are each glycosylated (N-linked (GlcNAc...) asparagine).

It belongs to the glycosyl hydrolase 47 family.

Its subcellular location is the endoplasmic reticulum lumen. Its function is as follows. Alpha-mannosidase-like protein involved in endoplasmic reticulum-associated degradation (ERAD). Delivers misfolded glycoproteins to proteasomes. It lacks mannosidase activity. The protein is ER degradation-enhancing alpha-mannosidase-like protein 1 (mnl1) of Schizosaccharomyces pombe (strain 972 / ATCC 24843) (Fission yeast).